The following is a 242-amino-acid chain: Host range factor p28 (242 aa).

The region spanning 21 to 131 (YIDEPNDIRL…QSILRGLVNW (111 aa)) is the KilA-N domain. The RING-type zinc finger occupies 173–226 (CGICYEVVYSKRLENDRYFGLLDSCNHIFCITCINIWHRTRRETGASDNCPICR).

Belongs to the orthopoxvirus OPG021 family.

The protein resides in the host cytoplasm. The enzyme catalyses S-ubiquitinyl-[E2 ubiquitin-conjugating enzyme]-L-cysteine + [acceptor protein]-L-lysine = [E2 ubiquitin-conjugating enzyme]-L-cysteine + N(6)-ubiquitinyl-[acceptor protein]-L-lysine.. Its function is as follows. RING-finger E3 ubiquitin ligase which catalyzes the formation of both 'Lys-48'- and 'Lys-63'-linked polyubiquitin chains. Plays an important role in virulence by acting as an anti-apoptotic factor. This Homo sapiens (Human) protein is Host range factor p28 (OPG021).